Here is a 225-residue protein sequence, read N- to C-terminus: Cytidylate kinase (225 aa).

ATP is bound at residue 12 to 20 (GPSGAGKGT).

This sequence belongs to the cytidylate kinase family. Type 1 subfamily.

The protein resides in the cytoplasm. The catalysed reaction is CMP + ATP = CDP + ADP. The enzyme catalyses dCMP + ATP = dCDP + ADP. This Stenotrophomonas maltophilia (strain K279a) protein is Cytidylate kinase.